We begin with the raw amino-acid sequence, 249 residues long: Tumor necrosis factor receptor superfamily member 13B (249 aa).

Residues 1–128 are Extracellular-facing; the sequence is MAMAFCPKDQ…LSSDQLTLYC (128 aa). TNFR-Cys repeat units lie at residues 5–38 and 42–76; these read FCPK…TDFC and NCRK…AHFC. 6 disulfides stabilise this stretch: C6–C19, C22–C34, C26–C38, C43–C58, C61–C72, and C65–C76. The tract at residues 86-116 is disordered; it reads LQPELGRPQAGEVEVRSDNSGRHQGSEHGPG. Residues 98-111 show a composition bias toward basic and acidic residues; sequence VEVRSDNSGRHQGS. The helical; Signal-anchor for type III membrane protein transmembrane segment at 129 to 149 threads the bilayer; sequence TLGVCLCAIFCCFLVALASFL. At 150–249 the chain is on the cytoplasmic side; it reads RRRGEPLPSQ…ASTGDARPAT (100 aa). Positions 156–176 are disordered; that stretch reads LPSQPAGPRGSQANSPHAHRP.

Binds TRAF2, TRAF5 and TRAF6. Binds the NH2-terminal domain of CAMLG with its C-terminus.

It localises to the membrane. Functionally, receptor for TNFSF13/APRIL and TNFSF13B/TALL1/BAFF/BLYS that binds both ligands with similar high affinity. Mediates calcineurin-dependent activation of NF-AT, as well as activation of NF-kappa-B and AP-1. Involved in the stimulation of B- and T-cell function and the regulation of humoral immunity. This chain is Tumor necrosis factor receptor superfamily member 13B (Tnfrsf13b), found in Mus musculus (Mouse).